Here is a 388-residue protein sequence, read N- to C-terminus: Phosphopentomutase (388 aa).

Mn(2+) contacts are provided by Asp-11, Asp-283, His-288, Asp-324, His-325, and His-336.

It belongs to the phosphopentomutase family. It depends on Mn(2+) as a cofactor.

It is found in the cytoplasm. The enzyme catalyses 2-deoxy-alpha-D-ribose 1-phosphate = 2-deoxy-D-ribose 5-phosphate. It carries out the reaction alpha-D-ribose 1-phosphate = D-ribose 5-phosphate. The protein operates within carbohydrate degradation; 2-deoxy-D-ribose 1-phosphate degradation; D-glyceraldehyde 3-phosphate and acetaldehyde from 2-deoxy-alpha-D-ribose 1-phosphate: step 1/2. Isomerase that catalyzes the conversion of deoxy-ribose 1-phosphate (dRib-1-P) and ribose 1-phosphate (Rib-1-P) to deoxy-ribose 5-phosphate (dRib-5-P) and ribose 5-phosphate (Rib-5-P), respectively. The polypeptide is Phosphopentomutase (Enterococcus faecalis (strain ATCC 700802 / V583)).